A 143-amino-acid chain; its full sequence is Phosphatidylethanolamine-binding protein homolog R644 (143 aa).

This sequence belongs to the phosphatidylethanolamine-binding protein family.

It is found in the virion. This is Phosphatidylethanolamine-binding protein homolog R644 from Acanthamoeba polyphaga mimivirus (APMV).